The following is a 635-amino-acid chain: UvrABC system protein C (635 aa).

Positions Met1–Ser14 are enriched in polar residues. Residues Met1 to Gly27 form a disordered region. The GIY-YIG domain maps to Ser40–Val117. Residues Thr227–Val262 enclose the UVR domain.

This sequence belongs to the UvrC family. In terms of assembly, interacts with UvrB in an incision complex.

It is found in the cytoplasm. Functionally, the UvrABC repair system catalyzes the recognition and processing of DNA lesions. UvrC both incises the 5' and 3' sides of the lesion. The N-terminal half is responsible for the 3' incision and the C-terminal half is responsible for the 5' incision. This chain is UvrABC system protein C, found in Ruegeria sp. (strain TM1040) (Silicibacter sp.).